The following is a 199-amino-acid chain: Putative acetyltransferase SACOL2570 (199 aa).

The protein belongs to the transferase hexapeptide repeat family.

The polypeptide is Putative acetyltransferase SACOL2570 (Staphylococcus aureus (strain COL)).